The chain runs to 310 residues: 17-beta-hydroxysteroid dehydrogenase type 3 (310 aa).

48-77 contacts NADP(+); sequence GQWAVITGAGDGIGKAYSFELAKRGLNVVL. Residue Ser-185 coordinates substrate. Tyr-198 acts as the Proton acceptor in catalysis.

This sequence belongs to the short-chain dehydrogenases/reductases (SDR) family. 17-beta-HSD 3 subfamily. As to expression, testis.

Its subcellular location is the endoplasmic reticulum. The catalysed reaction is a 17beta-hydroxy steroid + NADP(+) = a 17-oxo steroid + NADPH + H(+). It carries out the reaction testosterone + NADP(+) = androst-4-ene-3,17-dione + NADPH + H(+). The enzyme catalyses 17beta-estradiol + NADP(+) = estrone + NADPH + H(+). It catalyses the reaction 3beta-hydroxyandrost-5-en-17-one + NADPH + H(+) = androst-5-en-3beta,17beta-diol + NADP(+). The catalysed reaction is 17beta-hydroxy-5alpha-androstan-3-one + NADP(+) = 5alpha-androstan-3,17-dione + NADPH + H(+). It carries out the reaction androsterone + NADPH + H(+) = 5alpha-androstane-3alpha,17beta-diol + NADP(+). The enzyme catalyses 3beta-hydroxy-5alpha-androstan-17-one + NADPH + H(+) = 5alpha-androstane-3beta,17beta-diol + NADP(+). It catalyses the reaction androst-4-ene-3,11,17-trione + NADPH + H(+) = 17beta-hydroxyandrost-4-ene-3,11-dione + NADP(+). The catalysed reaction is 11beta-hydroxyandrost-4-ene-3,17-dione + NADPH + H(+) = 11beta,17beta-dihydroxyandrost-4-ene-3-one + NADP(+). Its pathway is hormone biosynthesis; testosterone biosynthesis. It functions in the pathway steroid metabolism. In terms of biological role, catalyzes the conversion of 17-oxosteroids to 17beta-hydroxysteroids. Favors the reduction of androstenedione to testosterone. Testosterone is the key androgen driving male development and function. Uses NADPH while the two other EDH17B enzymes use NADH. Androgens such as epiandrosterone, dehydroepiandrosterone, androsterone and androstanedione are accepted as substrates and reduced at C-17. Can reduce 11-ketoandrostenedione as well as 11beta-hydroxyandrostenedione at C-17 to the respective testosterone forms. This Homo sapiens (Human) protein is 17-beta-hydroxysteroid dehydrogenase type 3.